Consider the following 254-residue polypeptide: Phosphonates import ATP-binding protein PhnC 2 (254 aa).

Residues L4–Q248 enclose the ABC transporter domain. Residue G37–S44 coordinates ATP.

The protein belongs to the ABC transporter superfamily. Phosphonates importer (TC 3.A.1.9.1) family. In terms of assembly, the complex is composed of two ATP-binding proteins (PhnC), two transmembrane proteins (PhnE) and a solute-binding protein (PhnD).

Its subcellular location is the cell membrane. It catalyses the reaction phosphonate(out) + ATP + H2O = phosphonate(in) + ADP + phosphate + H(+). Its function is as follows. Part of the ABC transporter complex PhnCDE involved in phosphonates import. Responsible for energy coupling to the transport system. The polypeptide is Phosphonates import ATP-binding protein PhnC 2 (Oceanobacillus iheyensis (strain DSM 14371 / CIP 107618 / JCM 11309 / KCTC 3954 / HTE831)).